We begin with the raw amino-acid sequence, 300 residues long: tRNA pseudouridine synthase B (300 aa).

Asp-38 (nucleophile) is an active-site residue.

It belongs to the pseudouridine synthase TruB family. Type 1 subfamily.

The catalysed reaction is uridine(55) in tRNA = pseudouridine(55) in tRNA. In terms of biological role, responsible for synthesis of pseudouridine from uracil-55 in the psi GC loop of transfer RNAs. The sequence is that of tRNA pseudouridine synthase B from Dehalococcoides mccartyi (strain ATCC BAA-2266 / KCTC 15142 / 195) (Dehalococcoides ethenogenes (strain 195)).